The primary structure comprises 293 residues: Bifunctional protein FolD (293 aa).

NADP(+) is bound by residues 166-168 (GAS) and Ile-232.

The protein belongs to the tetrahydrofolate dehydrogenase/cyclohydrolase family. Homodimer.

It carries out the reaction (6R)-5,10-methylene-5,6,7,8-tetrahydrofolate + NADP(+) = (6R)-5,10-methenyltetrahydrofolate + NADPH. The enzyme catalyses (6R)-5,10-methenyltetrahydrofolate + H2O = (6R)-10-formyltetrahydrofolate + H(+). It participates in one-carbon metabolism; tetrahydrofolate interconversion. In terms of biological role, catalyzes the oxidation of 5,10-methylenetetrahydrofolate to 5,10-methenyltetrahydrofolate and then the hydrolysis of 5,10-methenyltetrahydrofolate to 10-formyltetrahydrofolate. In Yersinia enterocolitica serotype O:8 / biotype 1B (strain NCTC 13174 / 8081), this protein is Bifunctional protein FolD.